Reading from the N-terminus, the 619-residue chain is Auxin efflux carrier component 7 (619 aa).

The Extracellular segment spans residues 1-7 (MITWHDL). The chain crosses the membrane as a helical span at residues 8 to 28 (YTVLTAVIPLYVAMILAYGSV). The Cytoplasmic portion of the chain corresponds to 29–38 (RWWKIFSPDQ). Residues 39-59 (CSGINRFVAIFAVPLLSFHFI) traverse the membrane as a helical segment. Val51 is a binding site for (indol-3-yl)acetate. Residues 60–71 (SSNNPYAMNLRF) lie on the Extracellular side of the membrane. The chain crosses the membrane as a helical span at residues 72 to 92 (IAADTLQKLIMLTLLIIWANF). Over 93-101 (TRSGSLEWS) the chain is Cytoplasmic. Residues 102 to 122 (ITIFSLSTLPNTLVMGIPLLI) form a helical membrane-spanning segment. Asn112 and Leu114 together coordinate (indol-3-yl)acetate. Over 123-131 (AMYGEYSGS) the chain is Extracellular. The chain crosses the membrane as a helical span at residues 132–152 (LMVQIVVLQCIIWYTLLLFLF). Tyr145 is a binding site for (indol-3-yl)acetate. The Cytoplasmic segment spans residues 153-479 (EYRGAKILIM…LIRNPNTYSS (327 aa)). Ser229, Ser246, and Ser286 each carry phosphoserine. The interval 306-340 (GAPGSYPAPNPEFSTGNKTGSKAPKENHHHVGKSN) is disordered. Phosphothreonine is present on Thr320. Residue Ser357 is modified to Phosphoserine. Residues 393–413 (HTQNGENKAGPMNGDYGGEEE) form a disordered region. A helical transmembrane segment spans residues 480-500 (LIGLIWALVAFRWDVAMPKII). Topologically, residues 501–503 (QQS) are extracellular. A helical membrane pass occupies residues 504 to 524 (ISILSDAGLGMAMFSLGLFMA). The Cytoplasmic segment spans residues 525-538 (LQPKLIACGNSTAT). A helical membrane pass occupies residues 539–559 (FAMAVRFFTGPAVMAVAAMAI). At 560–564 (GLRGD) the chain is on the extracellular side. A helical membrane pass occupies residues 565–585 (LLRVAIVQAALPQGIVPFVFA). Residues Ile579 and Val580 each contribute to the (indol-3-yl)acetate site. Over 586–598 (KEYNVHPAILSTG) the chain is Cytoplasmic. Residues 599–619 (VIFGMLIALPITLVYYILLGL) traverse the membrane as a helical segment.

It belongs to the auxin efflux carrier (TC 2.A.69.1) family. As to quaternary structure, homodimer.

It is found in the cell membrane. Acts as a component of the auxin efflux carrier. Mediates the initial auxin gradient which contributes to the establishment of the apical-basal axis in early embryogenesis. Together with PIN3 and PIN4, involved in the connective auxin transport (CAT) that ensures communication across the shoot system, and modulates strigolactone-mediated shoot branching control. The abcb19 pin3 pin4 pin7 quadruple mutant exhibits an additive phenotype on strigolactone-mediated bud outgrowth responses and shoot branching control. This chain is Auxin efflux carrier component 7, found in Arabidopsis thaliana (Mouse-ear cress).